We begin with the raw amino-acid sequence, 245 residues long: Glutathione S-transferase F4 (245 aa).

Positions 25–106 (AGYKVHGDPF…YIAYVHSSRG (82 aa)) constitute a GST N-terminal domain. Residues 35 to 36 (ST), 64 to 65 (HK), 77 to 78 (QV), and 90 to 91 (ES) contribute to the glutathione site. A GST C-terminal domain is found at 114–244 (SHETMATLTM…QEKSWFNKPR (131 aa)).

Belongs to the GST superfamily. Phi family.

Its subcellular location is the cytoplasm. The protein resides in the cytosol. It catalyses the reaction RX + glutathione = an S-substituted glutathione + a halide anion + H(+). Its function is as follows. May be involved in the conjugation of reduced glutathione to a wide number of exogenous and endogenous hydrophobic electrophiles and have a detoxification role against certain herbicides. The chain is Glutathione S-transferase F4 (GSTF4) from Arabidopsis thaliana (Mouse-ear cress).